A 652-amino-acid polypeptide reads, in one-letter code: Ethylmalonyl-CoA mutase (652 aa).

Positions 519-647 constitute a B12-binding domain; that stretch reads PLKFVVGKPG…MDIVGLVDRT (129 aa). Residue H532 participates in adenosylcob(III)alamin binding.

It belongs to the methylmalonyl-CoA mutase family. As to quaternary structure, homodimer. Requires adenosylcob(III)alamin as cofactor.

The enzyme catalyses (2R)-ethylmalonyl-CoA = (2S)-methylsuccinyl-CoA. In terms of biological role, radical enzyme that catalyzes the transformation of (2R)-ethylmalonyl-CoA to (2S)-methylsuccinyl-CoA. Is involved in the ethylmalonyl-CoA pathway for acetyl-CoA assimilation required for R.sphaeroides growth on acetate as sole carbon source. Is highly specific for its substrate, ethylmalonyl-CoA, and accepts methylmalonyl-CoA only at 0.2% relative activity. The chain is Ethylmalonyl-CoA mutase from Cereibacter sphaeroides (strain ATCC 17023 / DSM 158 / JCM 6121 / CCUG 31486 / LMG 2827 / NBRC 12203 / NCIMB 8253 / ATH 2.4.1.) (Rhodobacter sphaeroides).